We begin with the raw amino-acid sequence, 174 residues long: UPF0340 protein MW2038 (174 aa).

Belongs to the UPF0340 family.

The protein is UPF0340 protein MW2038 of Staphylococcus aureus (strain MW2).